A 243-amino-acid chain; its full sequence is UPF0246 protein SEQ_2141 (243 aa).

The protein belongs to the UPF0246 family.

The sequence is that of UPF0246 protein SEQ_2141 from Streptococcus equi subsp. equi (strain 4047).